Consider the following 595-residue polypeptide: Probable carotenoid cleavage dioxygenase 4, chloroplastic (595 aa).

The N-terminal 34 residues, 1 to 34 (MDSVSSSSFLSSTFSLHHSLLRRRSSSPTLLRIN), are a transit peptide targeting the chloroplast. A disordered region spans residues 41-74 (RSPITNPSDNNDRRNKPKTLHNRTNHTLVSSPPK). The span at 55–64 (NKPKTLHNRT) shows a compositional bias: basic residues. The Fe cation site is built by H287, H336, H404, and H583.

Belongs to the carotenoid oxygenase family. In terms of assembly, interacts with VAR3. Interacts with PGM48. Requires Fe(2+) as cofactor. As to expression, mostly expressed in flowers (e.g. sepals and petals), siliques, seeds, leaves and cotyledons.

It is found in the plastid. It localises to the chloroplast. The protein localises to the plastoglobule. Functionally, may be involved in carotenoid cleavage. The sequence is that of Probable carotenoid cleavage dioxygenase 4, chloroplastic (CCD4) from Arabidopsis thaliana (Mouse-ear cress).